Reading from the N-terminus, the 139-residue chain is Maximins 4/H3 type 5 (139 aa).

The first 18 residues, 1–18, serve as a signal peptide directing secretion; sequence MNFKYIFAVSFLIASAYA. A propeptide spanning residues 19–43 is cleaved from the precursor; it reads RSVQNDEQSLSQRDVLEEESLREIR. Residue asparagine 70 is modified to Asparagine amide. The propeptide occupies 74–118; it reads TAEEHEVMKRLEAVMRDLDSLDHPEEASERETRGFNQDEIAKEKR. Isoleucine 138 carries the post-translational modification Isoleucine amide.

It belongs to the bombinin family. In terms of tissue distribution, expressed by the skin glands.

Its subcellular location is the secreted. In terms of biological role, maximin-4 shows antibacterial activity against both Gram-positive and Gram-negative bacteria. It also shows antimicrobial activity against the fungus C.albicans, but not against A.flavus nor P.uticale. It has little hemolytic activity. It does not possess a significant cytotoxicity against tumor cell lines. It does not possess a significant anti-HIV activity. Functionally, maximin-H3 shows antibacterial activity against both Gram-positive and Gram-negative bacteria. It also shows antimicrobial activity against the fungus C.albicans. Shows strong hemolytic activity. The sequence is that of Maximins 4/H3 type 5 from Bombina maxima (Giant fire-bellied toad).